Consider the following 457-residue polypeptide: BAG family molecular chaperone regulator 4 (457 aa).

Low complexity predominate over residues 1-20; it reads MSALRRSGYGPSDGPSYGRY. The tract at residues 1-104 is disordered; the sequence is MSALRRSGYG…PYPGYNSNYW (104 aa). A Phosphoserine modification is found at serine 7. Pro residues predominate over residues 31-48; it reads HVPPPLYPPLRPEPPQPP. An omega-N-methylarginine mark is found at arginine 41, arginine 54, arginine 108, and arginine 185. Disordered regions lie at residues 128–335 and 348–374; these read LNSY…SDLL and YGNA…SSDE. Positions 160-193 are enriched in polar residues; it reads YTQSNYSTEVPNTYRSPGNSPTPMSRWMYSQQDC. The span at 255–268 shows a compositional bias: low complexity; sequence PWPSAAPSAPSAGS. A compositionally biased stretch (pro residues) spans 284 to 295; that stretch reads PQPPPSPPPQQP. Polar residues-rich tracts occupy residues 326-335 and 348-365; these read AVNNDNSDLL and YGNA…SNNL. Positions 379–456 constitute a BAG domain; sequence SIKKIIHVLE…AILEKLEKKG (78 aa).

In terms of assembly, binds to the ATPase domain of HSP/HSC70 chaperones. Binds to the death domain of TNFRSF12. Binds to the death domain of TNFRSF1A in the absence of TNF and thereby prevents binding of adapter molecules such as TRADD or TRAF2. Interacts with PRKN.

The protein localises to the cytoplasm. Inhibits the chaperone activity of HSP70/HSC70 by promoting substrate release. Prevents constitutive TNFRSF1A signaling. Negative regulator of PRKN translocation to damaged mitochondria. The polypeptide is BAG family molecular chaperone regulator 4 (Bag4) (Mus musculus (Mouse)).